Consider the following 128-residue polypeptide: Con-Ins F1 (128 aa).

Positions 1 to 24 are cleaved as a signal peptide; the sequence is MTTSSYFLLVTLGLLLYVCRSSFG. 4 cysteine pairs are disulfide-bonded: cysteine 29–cysteine 104, cysteine 41–cysteine 107, cysteine 53–cysteine 120, and cysteine 106–cysteine 111. The propeptide at 59–89 is c peptide; that stretch reads LQGGTGKKRGRASPLRKRRAFLSMLKARAKR. Residue glutamate 115 is modified to 4-carboxyglutamate; partial. Serine 127 is subject to Serine amide.

It belongs to the insulin family. In terms of assembly, heterodimer of A and B chains; disulfide-linked. As to expression, expressed by the venom gland.

It localises to the secreted. This venom insulin facilitates prey capture by rapidly inducing hypoglycemic shock. Intraperitoneal injection of this peptide into zebrafish lowers blood glucose with the same potency than human insulin. In vivo, when applied to water, this peptide reduces overall locomotor activity of zebrafish larvae, observed as a significant decrease in the percentage of time spent swimming and movement frequency. The chain is Con-Ins F1 from Conus floridulus (Cone snail).